The sequence spans 229 residues: Flagellar L-ring protein (229 aa).

The signal sequence occupies residues 1–20 (MLKTVLRLPVCAALLALAAG). Cys21 carries the N-palmitoyl cysteine lipid modification. Cys21 is lipidated: S-diacylglycerol cysteine.

The protein belongs to the FlgH family. As to quaternary structure, the basal body constitutes a major portion of the flagellar organelle and consists of four rings (L,P,S, and M) mounted on a central rod.

Its subcellular location is the cell outer membrane. It is found in the bacterial flagellum basal body. Its function is as follows. Assembles around the rod to form the L-ring and probably protects the motor/basal body from shearing forces during rotation. This is Flagellar L-ring protein from Bordetella pertussis (strain Tohama I / ATCC BAA-589 / NCTC 13251).